The following is a 67-amino-acid chain: Beta-mammal toxin CeII9 (67 aa).

One can recognise an LCN-type CS-alpha/beta domain in the interval 1-66 (KEGYLVNHST…VWPLPKKTCN (66 aa)). Intrachain disulfides connect C12–C65, C16–C41, C25–C46, and C29–C48.

Belongs to the long (4 C-C) scorpion toxin superfamily. Sodium channel inhibitor family. Beta subfamily. Expressed by the venom gland.

It is found in the secreted. Beta toxins bind at site-4 of sodium channels and shift the voltage of activation toward more negative potentials thereby affecting sodium channel activation and promoting spontaneous and repetitive firing. This toxin is active against mammals and lethal to mice. Selectively modulates Nav1.4/SCN4A, a sodium channel present in both denervated and innervated skeletal muscle. The sequence is that of Beta-mammal toxin CeII9 from Centruroides elegans (Bark scorpion).